The primary structure comprises 249 residues: 5'-nucleotidase SurE (249 aa).

A divalent metal cation is bound by residues aspartate 8, aspartate 9, serine 39, and asparagine 91.

Belongs to the SurE nucleotidase family. The cofactor is a divalent metal cation.

Its subcellular location is the cytoplasm. The enzyme catalyses a ribonucleoside 5'-phosphate + H2O = a ribonucleoside + phosphate. Nucleotidase that shows phosphatase activity on nucleoside 5'-monophosphates. The sequence is that of 5'-nucleotidase SurE from Pseudomonas syringae pv. syringae (strain B728a).